A 181-amino-acid chain; its full sequence is Nucleoside triphosphate/diphosphate phosphatase (181 aa).

Residue arginine 26 is the Proton donor of the active site. Residues asparagine 90, aspartate 106, aspartate 108, aspartate 110, aspartate 123, and glutamate 126 each coordinate Mg(2+).

It belongs to the Ntdp family. It depends on Mg(2+) as a cofactor.

The catalysed reaction is a ribonucleoside 5'-triphosphate + H2O = a ribonucleoside 5'-diphosphate + phosphate + H(+). The enzyme catalyses a ribonucleoside 5'-diphosphate + H2O = a ribonucleoside 5'-phosphate + phosphate + H(+). Its function is as follows. Has nucleoside phosphatase activity towards nucleoside triphosphates and nucleoside diphosphates. This is Nucleoside triphosphate/diphosphate phosphatase from Staphylococcus carnosus (strain TM300).